We begin with the raw amino-acid sequence, 333 residues long: 5-formaminoimidazole-4-carboxamide-1-(beta)-D-ribofuranosyl 5'-monophosphate synthetase (333 aa).

Positions 10 and 74 each coordinate 5-amino-1-(5-phospho-beta-D-ribosyl)imidazole-4-carboxamide. The region spanning 95-324 is the ATP-grasp domain; sequence RNLFAWESNQ…ISREIRLALN (230 aa). ATP contacts are provided by residues 125–185 and Glu-207; that span reads VEDV…VPMY. Asn-230 serves as a coordination point for 5-amino-1-(5-phospho-beta-D-ribosyl)imidazole-4-carboxamide. Mg(2+) is bound by residues Glu-269 and Glu-282.

Belongs to the phosphohexose mutase family. Mg(2+) serves as cofactor. Requires Mn(2+) as cofactor.

The catalysed reaction is 5-amino-1-(5-phospho-beta-D-ribosyl)imidazole-4-carboxamide + formate + ATP = 5-formamido-1-(5-phospho-D-ribosyl)imidazole-4-carboxamide + ADP + phosphate. Its pathway is purine metabolism; IMP biosynthesis via de novo pathway; 5-formamido-1-(5-phospho-D-ribosyl)imidazole-4-carboxamide from 5-amino-1-(5-phospho-D-ribosyl)imidazole-4-carboxamide (formate route): step 1/1. Functionally, catalyzes the ATP- and formate-dependent formylation of 5-aminoimidazole-4-carboxamide-1-beta-d-ribofuranosyl 5'-monophosphate (AICAR) to 5-formaminoimidazole-4-carboxamide-1-beta-d-ribofuranosyl 5'-monophosphate (FAICAR) in the absence of folates. This chain is 5-formaminoimidazole-4-carboxamide-1-(beta)-D-ribofuranosyl 5'-monophosphate synthetase, found in Sulfolobus acidocaldarius (strain ATCC 33909 / DSM 639 / JCM 8929 / NBRC 15157 / NCIMB 11770).